A 42-amino-acid polypeptide reads, in one-letter code: uncharacterized protein (42 aa).

Residues 20-42 (RSGRAERGVRAHSPAWSERPTPN) are disordered.

This is an uncharacterized protein from Escherichia coli.